Consider the following 430-residue polypeptide: 3-phosphoshikimate 1-carboxyvinyltransferase (430 aa).

K23, S24, and R28 together coordinate 3-phosphoshikimate. Residue K23 participates in phosphoenolpyruvate binding. G95 and R123 together coordinate phosphoenolpyruvate. S169, Q171, D315, and K342 together coordinate 3-phosphoshikimate. Q171 lines the phosphoenolpyruvate pocket. The active-site Proton acceptor is D315. Phosphoenolpyruvate is bound by residues R346 and R388.

It belongs to the EPSP synthase family. In terms of assembly, monomer.

It localises to the cytoplasm. The catalysed reaction is 3-phosphoshikimate + phosphoenolpyruvate = 5-O-(1-carboxyvinyl)-3-phosphoshikimate + phosphate. The protein operates within metabolic intermediate biosynthesis; chorismate biosynthesis; chorismate from D-erythrose 4-phosphate and phosphoenolpyruvate: step 6/7. Catalyzes the transfer of the enolpyruvyl moiety of phosphoenolpyruvate (PEP) to the 5-hydroxyl of shikimate-3-phosphate (S3P) to produce enolpyruvyl shikimate-3-phosphate and inorganic phosphate. In Streptococcus pyogenes serotype M6 (strain ATCC BAA-946 / MGAS10394), this protein is 3-phosphoshikimate 1-carboxyvinyltransferase.